The sequence spans 528 residues: Autophagy-related protein 22 (528 aa).

Topologically, residues 1–98 are cytoplasmic; it reads MSYGTINDMN…IFVDTSSFAL (98 aa). A helical membrane pass occupies residues 99–119; sequence YVFSLSVLFQTIIVISVSGIV. Residues 120-130 are Vacuolar-facing; that stretch reads DLWGSVKFKGR. Residues 131 to 151 traverse the membrane as a helical segment; sequence ILVWFGIVGALSTVAISKLND. Topologically, residues 152 to 153 are cytoplasmic; it reads TQ. Residues 154–174 form a helical membrane-spanning segment; the sequence is IYSLAGLYIVANGCFGVINVV. The Vacuolar segment spans residues 175 to 210; that stretch reads GNSLLPIFVKDSLKCQSQGAYEPDKVDSLTTVISGR. Residues 211–231 traverse the membrane as a helical segment; the sequence is GASLGYSSALIVQIVSMFLVA. Topologically, residues 232 to 241 are cytoplasmic; the sequence is SKKGSKQDVQ. A helical transmembrane segment spans residues 242–262; it reads VAVLFVGIWWFVWQLPMIWLI. Topologically, residues 263–318 are vacuolar; sequence DDVTIPIRVDDSTLASARSPYPGEQDALGQLNWKNYLSYGWVSLFESFKHARLLKD. Ser-278 bears the Phosphoserine mark. Residues 319–339 form a helical membrane-spanning segment; sequence VMIFLIAWFIISDSITTINST. Residues 340-352 are Cytoplasmic-facing; the sequence is AVLFSKAELHMST. Residues 353–373 traverse the membrane as a helical segment; that stretch reads LNLIMISVLTVVNAMLGAFMI. Residues 374–388 are Vacuolar-facing; sequence PQFLATKFRWTSSQT. Residues 389–409 traverse the membrane as a helical segment; the sequence is LMYIIIWASFIPFYGILGFFF. Residues 410 to 417 are Cytoplasmic-facing; sequence NAFGLKHK. A helical membrane pass occupies residues 418 to 438; the sequence is FEMFLLAIWYGLSLGGLSAVS. Residues 439–485 are Vacuolar-facing; sequence RSVFSLIVPPGKESTFFSMFSITDKGSSILGPFLVGLLTDKTHNIRY. A helical transmembrane segment spans residues 486-506; sequence SFYFFFLLLMLSLPVLNCLDV. The Cytoplasmic segment spans residues 507–528; sequence KRGRREAEELSQVLPESERRLD.

It belongs to the ATG22 family.

Its subcellular location is the vacuole membrane. In terms of biological role, vacuolar effluxer which mediate the efflux of leucine and other amino acids resulting from autophagic degradation. The release of autophagic amino acids allows the maintenance of protein synthesis and viability during nitrogen starvation. This chain is Autophagy-related protein 22 (ATG22), found in Saccharomyces cerevisiae (strain ATCC 204508 / S288c) (Baker's yeast).